Consider the following 109-residue polypeptide: MEVSAVLRGVHLSPQKARLVADLVRGKKVDQALNILAFTPKKGAEVIKKVVESAIANAEHNEGADIDELKVTSIYVDKGLVLKRIRARAKGRAGRIIKPTCHITVTVGN.

This sequence belongs to the universal ribosomal protein uL22 family. Part of the 50S ribosomal subunit.

Functionally, this protein binds specifically to 23S rRNA; its binding is stimulated by other ribosomal proteins, e.g. L4, L17, and L20. It is important during the early stages of 50S assembly. It makes multiple contacts with different domains of the 23S rRNA in the assembled 50S subunit and ribosome. In terms of biological role, the globular domain of the protein is located near the polypeptide exit tunnel on the outside of the subunit, while an extended beta-hairpin is found that lines the wall of the exit tunnel in the center of the 70S ribosome. The sequence is that of Large ribosomal subunit protein uL22 from Methylobacillus flagellatus (strain ATCC 51484 / DSM 6875 / VKM B-1610 / KT).